A 559-amino-acid chain; its full sequence is Proline--tRNA ligase (559 aa).

Belongs to the class-II aminoacyl-tRNA synthetase family. ProS type 1 subfamily. Homodimer.

It is found in the cytoplasm. It catalyses the reaction tRNA(Pro) + L-proline + ATP = L-prolyl-tRNA(Pro) + AMP + diphosphate. In terms of biological role, catalyzes the attachment of proline to tRNA(Pro) in a two-step reaction: proline is first activated by ATP to form Pro-AMP and then transferred to the acceptor end of tRNA(Pro). As ProRS can inadvertently accommodate and process non-cognate amino acids such as alanine and cysteine, to avoid such errors it has two additional distinct editing activities against alanine. One activity is designated as 'pretransfer' editing and involves the tRNA(Pro)-independent hydrolysis of activated Ala-AMP. The other activity is designated 'posttransfer' editing and involves deacylation of mischarged Ala-tRNA(Pro). The misacylated Cys-tRNA(Pro) is not edited by ProRS. This is Proline--tRNA ligase from Ruthia magnifica subsp. Calyptogena magnifica.